A 200-amino-acid chain; its full sequence is Recombination protein RecR (200 aa).

Residues 57-72 (CNECRTFTEEDVCHIC) form a C4-type zinc finger. Residues 81 to 176 (GLLCVVESPA…DASRIAHGVP (96 aa)) form the Toprim domain.

This sequence belongs to the RecR family.

Its function is as follows. May play a role in DNA repair. It seems to be involved in an RecBC-independent recombinational process of DNA repair. It may act with RecF and RecO. This is Recombination protein RecR from Vibrio vulnificus (strain CMCP6).